A 64-amino-acid chain; its full sequence is Putative antitoxin MJ0975 (64 aa).

The protein belongs to the UPF0165 family.

Its function is as follows. Possibly the antitoxin component of a type II toxin-antitoxin (TA) system. Its cognate toxin is VapC2 (Potential). The chain is Putative antitoxin MJ0975 (vapB2) from Methanocaldococcus jannaschii (strain ATCC 43067 / DSM 2661 / JAL-1 / JCM 10045 / NBRC 100440) (Methanococcus jannaschii).